Reading from the N-terminus, the 941-residue chain is Isoleucine--tRNA ligase (941 aa).

Residues 58 to 68 (PYANGDIHIGH) carry the 'HIGH' region motif. Residue E562 participates in L-isoleucyl-5'-AMP binding. The 'KMSKS' region motif lies at 603-607 (KMSKS). Residue K606 participates in ATP binding. Zn(2+) is bound by residues C904, C907, C924, and C927.

It belongs to the class-I aminoacyl-tRNA synthetase family. IleS type 1 subfamily. As to quaternary structure, monomer. Requires Zn(2+) as cofactor.

It localises to the cytoplasm. It carries out the reaction tRNA(Ile) + L-isoleucine + ATP = L-isoleucyl-tRNA(Ile) + AMP + diphosphate. Its function is as follows. Catalyzes the attachment of isoleucine to tRNA(Ile). As IleRS can inadvertently accommodate and process structurally similar amino acids such as valine, to avoid such errors it has two additional distinct tRNA(Ile)-dependent editing activities. One activity is designated as 'pretransfer' editing and involves the hydrolysis of activated Val-AMP. The other activity is designated 'posttransfer' editing and involves deacylation of mischarged Val-tRNA(Ile). This chain is Isoleucine--tRNA ligase, found in Alkalilimnicola ehrlichii (strain ATCC BAA-1101 / DSM 17681 / MLHE-1).